Consider the following 100-residue polypeptide: Large ribosomal subunit protein uL23 (100 aa).

Belongs to the universal ribosomal protein uL23 family. In terms of assembly, part of the 50S ribosomal subunit. Contacts protein L29, and trigger factor when it is bound to the ribosome.

Functionally, one of the early assembly proteins it binds 23S rRNA. One of the proteins that surrounds the polypeptide exit tunnel on the outside of the ribosome. Forms the main docking site for trigger factor binding to the ribosome. This is Large ribosomal subunit protein uL23 from Pseudothermotoga lettingae (strain ATCC BAA-301 / DSM 14385 / NBRC 107922 / TMO) (Thermotoga lettingae).